The sequence spans 366 residues: Probable S-adenosyl-L-methionine-binding protein AF_0433 (366 aa).

A TsaA-like domain is found at 6 to 136 (LRQVGVIRSP…YSSTIDSVGN (131 aa)). Residues 23-25 (PHQ), 61-62 (DR), Arg85, and 116-119 (LDGT) each bind S-adenosyl-L-methionine.

Belongs to the tRNA methyltransferase O family.

This chain is Probable S-adenosyl-L-methionine-binding protein AF_0433, found in Archaeoglobus fulgidus (strain ATCC 49558 / DSM 4304 / JCM 9628 / NBRC 100126 / VC-16).